The following is a 432-amino-acid chain: Adenylosuccinate synthetase (432 aa).

GTP-binding positions include 13-19 and 41-43; these read GDEGKGK and GHT. The active-site Proton acceptor is the Asp14. 2 residues coordinate Mg(2+): Asp14 and Gly41. Residues 14–17, 39–42, Thr130, Arg144, Gln225, Thr240, and Arg304 each bind IMP; these read DEGK and NAGH. Catalysis depends on His42, which acts as the Proton donor. 300–306 serves as a coordination point for substrate; the sequence is ATTGRSR. Residues Arg306, 332-334, and 415-417 each bind GTP; these read KLD and STG.

The protein belongs to the adenylosuccinate synthetase family. As to quaternary structure, homodimer. The cofactor is Mg(2+).

Its subcellular location is the cytoplasm. It carries out the reaction IMP + L-aspartate + GTP = N(6)-(1,2-dicarboxyethyl)-AMP + GDP + phosphate + 2 H(+). It functions in the pathway purine metabolism; AMP biosynthesis via de novo pathway; AMP from IMP: step 1/2. Its function is as follows. Plays an important role in the de novo pathway of purine nucleotide biosynthesis. Catalyzes the first committed step in the biosynthesis of AMP from IMP. This chain is Adenylosuccinate synthetase, found in Yersinia enterocolitica serotype O:8 / biotype 1B (strain NCTC 13174 / 8081).